A 156-amino-acid polypeptide reads, in one-letter code: ATP synthase subunit b (156 aa).

The helical transmembrane segment at 7-27 (LIGQLIAFALFVAFCMKFVWP) threads the bilayer.

Belongs to the ATPase B chain family. As to quaternary structure, F-type ATPases have 2 components, F(1) - the catalytic core - and F(0) - the membrane proton channel. F(1) has five subunits: alpha(3), beta(3), gamma(1), delta(1), epsilon(1). F(0) has three main subunits: a(1), b(2) and c(10-14). The alpha and beta chains form an alternating ring which encloses part of the gamma chain. F(1) is attached to F(0) by a central stalk formed by the gamma and epsilon chains, while a peripheral stalk is formed by the delta and b chains.

The protein resides in the cell inner membrane. Its function is as follows. F(1)F(0) ATP synthase produces ATP from ADP in the presence of a proton or sodium gradient. F-type ATPases consist of two structural domains, F(1) containing the extramembraneous catalytic core and F(0) containing the membrane proton channel, linked together by a central stalk and a peripheral stalk. During catalysis, ATP synthesis in the catalytic domain of F(1) is coupled via a rotary mechanism of the central stalk subunits to proton translocation. Component of the F(0) channel, it forms part of the peripheral stalk, linking F(1) to F(0). The polypeptide is ATP synthase subunit b (Actinobacillus pleuropneumoniae serotype 5b (strain L20)).